The primary structure comprises 685 residues: Methionine--tRNA ligase (685 aa).

The 'HIGH' region signature appears at 15–25 (PYANGPIHLGH). Cysteine 146, cysteine 149, cysteine 159, and cysteine 162 together coordinate Zn(2+). The 'KMSKS' region signature appears at 331 to 335 (KMSKS). ATP is bound at residue lysine 334. A tRNA-binding domain is found at 583-685 (DFAKMDLRVA…AGVKAGSRVK (103 aa)).

Belongs to the class-I aminoacyl-tRNA synthetase family. MetG type 1 subfamily. Homodimer. The cofactor is Zn(2+).

The protein localises to the cytoplasm. The catalysed reaction is tRNA(Met) + L-methionine + ATP = L-methionyl-tRNA(Met) + AMP + diphosphate. Is required not only for elongation of protein synthesis but also for the initiation of all mRNA translation through initiator tRNA(fMet) aminoacylation. This chain is Methionine--tRNA ligase, found in Actinobacillus succinogenes (strain ATCC 55618 / DSM 22257 / CCUG 43843 / 130Z).